We begin with the raw amino-acid sequence, 359 residues long: 4-hydroxy-3-methylbut-2-en-1-yl diphosphate synthase (flavodoxin) (359 aa).

Cys-264, Cys-267, Cys-299, and Glu-306 together coordinate [4Fe-4S] cluster.

This sequence belongs to the IspG family. [4Fe-4S] cluster is required as a cofactor.

It catalyses the reaction (2E)-4-hydroxy-3-methylbut-2-enyl diphosphate + oxidized [flavodoxin] + H2O + 2 H(+) = 2-C-methyl-D-erythritol 2,4-cyclic diphosphate + reduced [flavodoxin]. It participates in isoprenoid biosynthesis; isopentenyl diphosphate biosynthesis via DXP pathway; isopentenyl diphosphate from 1-deoxy-D-xylulose 5-phosphate: step 5/6. In terms of biological role, converts 2C-methyl-D-erythritol 2,4-cyclodiphosphate (ME-2,4cPP) into 1-hydroxy-2-methyl-2-(E)-butenyl 4-diphosphate. The polypeptide is 4-hydroxy-3-methylbut-2-en-1-yl diphosphate synthase (flavodoxin) (Helicobacter pylori (strain J99 / ATCC 700824) (Campylobacter pylori J99)).